The following is a 207-amino-acid chain: Small ribosomal subunit protein bS6c (207 aa).

A chloroplast-targeting transit peptide spans 1 to 59 (MASSLCVSNSTICPLPNVSSQPLLSFSHSLRPFISKSKPMCASIQKRDGSQFVVKSQAL). The tract at residues 69–99 (GFGSDDDPTSPSGSGVSTALEDKPEPQCPPG) is disordered. Over residues 77–86 (TSPSGSGVST) the composition is skewed to low complexity.

Belongs to the bacterial ribosomal protein bS6 family. As to quaternary structure, part of the 30S ribosomal subunit.

It is found in the plastid. It localises to the chloroplast. In terms of biological role, binds together with bS18 to 16S ribosomal RNA. The sequence is that of Small ribosomal subunit protein bS6c (RPS6) from Arabidopsis thaliana (Mouse-ear cress).